The following is a 240-amino-acid chain: 1-(5-phosphoribosyl)-5-[(5-phosphoribosylamino)methylideneamino] imidazole-4-carboxamide isomerase (240 aa).

Residue D8 is the Proton acceptor of the active site. The active-site Proton donor is D129.

The protein belongs to the HisA/HisF family.

It is found in the cytoplasm. The enzyme catalyses 1-(5-phospho-beta-D-ribosyl)-5-[(5-phospho-beta-D-ribosylamino)methylideneamino]imidazole-4-carboxamide = 5-[(5-phospho-1-deoxy-D-ribulos-1-ylimino)methylamino]-1-(5-phospho-beta-D-ribosyl)imidazole-4-carboxamide. It functions in the pathway amino-acid biosynthesis; L-histidine biosynthesis; L-histidine from 5-phospho-alpha-D-ribose 1-diphosphate: step 4/9. In Listeria welshimeri serovar 6b (strain ATCC 35897 / DSM 20650 / CCUG 15529 / CIP 8149 / NCTC 11857 / SLCC 5334 / V8), this protein is 1-(5-phosphoribosyl)-5-[(5-phosphoribosylamino)methylideneamino] imidazole-4-carboxamide isomerase.